The following is a 105-amino-acid chain: DNA-directed RNA polymerase subunit omega (105 aa).

The protein belongs to the RNA polymerase subunit omega family. In terms of assembly, the RNAP catalytic core consists of 2 alpha, 1 beta, 1 beta' and 1 omega subunit. When a sigma factor is associated with the core the holoenzyme is formed, which can initiate transcription.

It carries out the reaction RNA(n) + a ribonucleoside 5'-triphosphate = RNA(n+1) + diphosphate. Its function is as follows. Promotes RNA polymerase assembly. Latches the N- and C-terminal regions of the beta' subunit thereby facilitating its interaction with the beta and alpha subunits. The sequence is that of DNA-directed RNA polymerase subunit omega from Streptococcus equi subsp. equi (strain 4047).